The sequence spans 1440 residues: Protein lin-15B (1440 aa).

Disordered stretches follow at residues 1 to 22 (MQTLKTARLTSNPASIPTSSSS), 48 to 67 (ILRHRTLPAPTQETAHHLDA), 618 to 660 (PKEE…GRPI), and 738 to 769 (KDEPLDEDDFNHPSTDPVPNRTTASSQGPSSY). Low complexity predominate over residues 10–22 (TSNPASIPTSSSS). Positions 631–646 (STSSPATSSPTIIRPR) are enriched in low complexity. Polar residues predominate over residues 757 to 767 (NRTTASSQGPS). The THAP-type zinc finger occupies 1135 to 1209 (NPGVCCFCSK…LLKGMIPDAA (75 aa)). Disordered stretches follow at residues 1239 to 1281 (AIDL…EPSQ), 1298 to 1350 (RELS…GTSQ), and 1395 to 1440 (FADE…PSNE). The span at 1254 to 1264 (TQEEEEEEEYE) shows a compositional bias: acidic residues. The segment at residues 1317-1329 (PNPRGRPRKYPKN) is a DNA-binding region (a.T hook 1). Residues 1396–1407 (ADEEEEEEEYEE) show a composition bias toward acidic residues. The segment at residues 1418–1430 (GRPVGRPRKDANK) is a DNA-binding region (a.T hook 2).

Functionally, synthetic multivulva (synMuv) class B protein. SynMuv proteins are required to repress the induction of vulval development. Acts redundantly with SynMuv class A protein lin-15A to negatively regulate vulval development. Regulates let-23 basal activity. The protein is Protein lin-15B of Caenorhabditis elegans.